Consider the following 298-residue polypeptide: Glycine--tRNA ligase alpha subunit (298 aa).

The protein belongs to the class-II aminoacyl-tRNA synthetase family. Tetramer of two alpha and two beta subunits.

The protein resides in the cytoplasm. The catalysed reaction is tRNA(Gly) + glycine + ATP = glycyl-tRNA(Gly) + AMP + diphosphate. This Helicobacter pylori (strain G27) protein is Glycine--tRNA ligase alpha subunit.